The following is a 479-amino-acid chain: Altronate oxidoreductase (479 aa).

18 to 29 lines the NAD(+) pocket; sequence IIQFGEGNFLRA.

This sequence belongs to the mannitol dehydrogenase family. UxaB subfamily.

The enzyme catalyses D-altronate + NAD(+) = keto-D-tagaturonate + NADH + H(+). Its pathway is carbohydrate metabolism; pentose and glucuronate interconversion. The protein is Altronate oxidoreductase of Phocaeicola vulgatus (strain ATCC 8482 / DSM 1447 / JCM 5826 / CCUG 4940 / NBRC 14291 / NCTC 11154) (Bacteroides vulgatus).